Reading from the N-terminus, the 132-residue chain is Dehydratase CTB10 (132 aa).

The region spanning 21–117 (PDQSEEDHHN…IPDHFNFADM (97 aa)) is the EthD domain.

This sequence belongs to the tpcK family.

It functions in the pathway mycotoxin biosynthesis. In terms of biological role, dehydratase; part of the gene cluster that mediates the biosynthesis of cercosporin, a light-activated, non-host-selective toxin. The perylenequinone chromophore of cercosporin absorbs light energy to attain an electronically-activated triplet state and produces active oxygen species such as the hydroxyl radical, superoxide, hydrogen peroxide or singlet oxygen upon reaction with oxygen molecules. These reactive oxygen species cause damage to various cellular components including lipids, proteins and nucleic acids. The first step of cercosporin biosynthesis is performed by the polyketide synthase CTB1 which catalyzes the formation of nor-toralactone. The starter unit acyltransferase (SAT) domain of CTB1 initiates polyketide extension by the selective utilization of acetyl-CoA, which is elongated to the heptaketide in the beta-ketoacyl synthase (KS) domain by successive condensations with six malonyl units introduced by the malonyl acyltransferase (MAT) domain. The product template (PT) domain catalyzes C4-C9 and C2-C11 aldol cyclizations and dehydrations to a trihydroxynaphthalene, which is thought to be delivered to the thioesterase (TE) domain for product release. The bifunctional enzyme CTB3 then methylates nor-toralactone to toralactone before conducting an unusual oxidative aromatic ring opening. The O-methyltransferase CTB2 further methylates the nascent OH-6 of the CBT3 product, blocking further oxidation at this site before the reductase CTB6 reduces the 2-oxopropyl ketone at position C7, giving naphthalene. The FAD-dependent monooxygenase CTB5 in concert with the multicopper oxidase CTB12 are responsible for homodimerization of naphthalene with CTB7 installing the dioxepine moiety, finally producing cercosporin. The fasciclin domain-containing protein CTB11 might act with CTB5 and CTB12 whereas the roles of CTB9 and CTB10 have still to be elucidated. In Cercospora beticola (Sugarbeet leaf spot fungus), this protein is Dehydratase CTB10.